A 525-amino-acid chain; its full sequence is Glutamate--cysteine ligase (525 aa).

Belongs to the glutamate--cysteine ligase type 1 family. Type 1 subfamily.

It carries out the reaction L-cysteine + L-glutamate + ATP = gamma-L-glutamyl-L-cysteine + ADP + phosphate + H(+). The protein operates within sulfur metabolism; glutathione biosynthesis; glutathione from L-cysteine and L-glutamate: step 1/2. This Alcanivorax borkumensis (strain ATCC 700651 / DSM 11573 / NCIMB 13689 / SK2) protein is Glutamate--cysteine ligase.